The following is a 1176-amino-acid chain: Histidine kinase 2 (1176 aa).

The Cytoplasmic segment spans residues 1–29; it reads MSITCELLNLTSKKAKKSSSSDKKWLKKP. The chain crosses the membrane as a helical span at residues 30–50; it reads LFFLILCGSLVIVLVMFLRLG. The Extracellular portion of the chain corresponds to 51–174; that stretch reads RSQKEETDSC…LEQGLSSYLR (124 aa). A helical membrane pass occupies residues 175 to 195; sequence NAWWCLILGVLVCHKIYVSHS. Topologically, residues 196–232 are cytoplasmic; it reads KARGERKEKVHLQEALAPKKQQQRAQTSSRGAGRWRK. The helical transmembrane segment at 233 to 253 threads the bilayer; the sequence is NILLLGILGGVSFSVWWFWDT. Residues 254-536 lie on the Extracellular side of the membrane; the sequence is NEEIIMKRRE…CRFKHKLPIP (283 aa). The CHASE domain maps to 302 to 526; that stretch reads IPSAIDQRTF…GDPSRNHEMH (225 aa). The chain crosses the membrane as a helical span at residues 537 to 557; that stretch reads WTAITPSILVLVITFLVGYIL. Residues 558 to 1176 are Cytoplasmic-facing; sequence YEAINRIATV…TAVARFFEPC (619 aa). The Histidine kinase domain occupies 594–867; that stretch reads TVSHEIRTPM…TFSFTGVFGK (274 aa). H597 bears the Phosphohistidine; by autocatalysis mark. 2 Response regulatory domains span residues 891 to 1013 and 1036 to 1173; these read RALV…QETL and QILV…ARFF. Residues D942 and D1086 each carry the 4-aspartylphosphate modification.

Self-interacts. Interacts with AHK3, AHP1, AHP2, AHP3, AHP5, ATAF2, AT2S3, BETAA-AD, CYP20-2, DRP1A, HIR1, HIR2, PI4KB1, PI4KG5 and At4g12060. Autophosphorylated predominantly on His residues. Activation probably requires a transfer of a phosphate group between a His in the transmitter domain and an Asp of the receiver domain. Expressed in roots, leaves and flowers, mostly in the vascular tissues. Present in seedlings.

Its subcellular location is the endoplasmic reticulum membrane. The enzyme catalyses ATP + protein L-histidine = ADP + protein N-phospho-L-histidine.. Its activity is regulated as follows. Activated by cytokinins to initiate phosphorelay signaling. Functionally, cytokinins (CK) receptor related to bacterial two-component regulators. Functions as a histidine kinase and transmits the stress signal to a downstream MAPK cascade. This protein undergoes an ATP-dependent autophosphorylation at a conserved histidine residue in the kinase core, and a phosphoryl group is then transferred to a conserved aspartate residue in the receiver domain. In the presence of cytokinin, feeds phosphate to phosphorelay-integrating histidine phosphotransfer protein (HPt) and activates subsequent cascade. Involved in meristems establishment in seedlings. Redundant negative regulator of drought and salt stress responses and abscisic acid (ABA) signaling. Together with AHK3, plays a negative regulatory role in cold stress signaling via inhibition of ABA response, occurring independently of the cold acclimation pathway. Redundant positive regulator of cytokinin signaling that regulates many developmental processes including seed germination, cell division, seed size, chlorophyll retention during leaf senescence, root repression and shoot promotion. Involved in alkamides (e.g. N-isobutyl decanamide) and N-acylethanolamides (NAE) signaling that control meristematic activity and differentiation processes during plant development. Contributes to vascular bundle formation and secondary growth in a cytokinin-dependent manner, probably by promoting the maintenance of mitotic activity and/or identity of procambial cells. Together with AHK4, required for growth and reproduction promotion stimulated by the endophytic fungus Piriformospora indica in a trans-zeatin-dependent manner. Required by the cytokinin-dependent flower development regulation pathway. The polypeptide is Histidine kinase 2 (AHK2) (Arabidopsis thaliana (Mouse-ear cress)).